The chain runs to 183 residues: Capsid protein (183 aa).

The interval 136 to 183 is disordered; it reads NAPILSTLPETTVVRRRGRSPRRRTPSPRRRRSQSPRRRRSQSRESQC. The segment covering 149 to 176 has biased composition (basic residues); sequence VRRRGRSPRRRTPSPRRRRSQSPRRRRS. Phosphoserine; by host occurs at positions 155, 162, and 170. Residues 155–161 form a 1; half-length repeat; sequence SPRRRTP. The interval 155–177 is 3 X 8 AA repeats of S-P-R-R-R-[PR]-S-Q; the sequence is SPRRRTPSPRRRRSQSPRRRRSQ. Residues 158–175 carry the Bipartite nuclear localization signal motif; sequence RRTPSPRRRRSQSPRRRR. 2 tandem repeats follow at residues 162 to 169 and 170 to 177. An RNA binding region spans residues 177–183; sequence QSRESQC.

The protein belongs to the orthohepadnavirus core antigen family. In terms of assembly, homodimerizes, then multimerizes. Interacts with cytosol exposed regions of viral L glycoprotein present in the reticulum-to-Golgi compartment. Interacts with human FLNB. Phosphorylated form interacts with host importin alpha; this interaction depends on the exposure of the NLS, which itself depends upon genome maturation and/or phosphorylation of the capsid protein. Interacts with host NUP153. In terms of processing, phosphorylated by host SRPK1, SRPK2, and maybe protein kinase C or GAPDH. Phosphorylation is critical for pregenomic RNA packaging. Protein kinase C phosphorylation is stimulated by HBx protein and may play a role in transport of the viral genome to the nucleus at the late step during the viral replication cycle.

The protein localises to the virion. Its subcellular location is the host cytoplasm. Self assembles to form an icosahedral capsid. Most capsids appear to be large particles with an icosahedral symmetry of T=4 and consist of 240 copies of capsid protein, though a fraction forms smaller T=3 particles consisting of 180 capsid proteins. Entering capsids are transported along microtubules to the nucleus. Phosphorylation of the capsid is thought to induce exposure of nuclear localization signal in the C-terminal portion of the capsid protein that allows binding to the nuclear pore complex via the importin (karyopherin-) alpha and beta. Capsids are imported in intact form through the nuclear pore into the nuclear basket, where it probably binds NUP153. Only capsids that contain the mature viral genome can release the viral DNA and capsid protein into the nucleoplasm. Immature capsids get stuck in the basket. Capsids encapsulate the pre-genomic RNA and the P protein. Pre-genomic RNA is reverse-transcribed into DNA while the capsid is still in the cytoplasm. The capsid can then either be directed to the nucleus, providing more genomes for transcription, or bud through the endoplasmic reticulum to provide new virions. The polypeptide is Capsid protein (Homo sapiens (Human)).